The primary structure comprises 274 residues: tRNA-cytidine(32) 2-sulfurtransferase (274 aa).

A PP-loop motif motif is present at residues 40 to 45 (SGGKDS). Cys-115, Cys-118, and Cys-206 together coordinate [4Fe-4S] cluster.

This sequence belongs to the TtcA family. Homodimer. It depends on Mg(2+) as a cofactor. [4Fe-4S] cluster is required as a cofactor.

The protein resides in the cytoplasm. It carries out the reaction cytidine(32) in tRNA + S-sulfanyl-L-cysteinyl-[cysteine desulfurase] + AH2 + ATP = 2-thiocytidine(32) in tRNA + L-cysteinyl-[cysteine desulfurase] + A + AMP + diphosphate + H(+). Its pathway is tRNA modification. Catalyzes the ATP-dependent 2-thiolation of cytidine in position 32 of tRNA, to form 2-thiocytidine (s(2)C32). The sulfur atoms are provided by the cysteine/cysteine desulfurase (IscS) system. This is tRNA-cytidine(32) 2-sulfurtransferase from Pseudomonas fluorescens (strain SBW25).